We begin with the raw amino-acid sequence, 131 residues long: D-ribose pyranase (131 aa).

The active-site Proton donor is the His20. Residues Asp28, His98, and 120-122 (YAN) each bind substrate.

Belongs to the RbsD / FucU family. RbsD subfamily. Homodecamer.

It is found in the cytoplasm. It carries out the reaction beta-D-ribopyranose = beta-D-ribofuranose. It functions in the pathway carbohydrate metabolism; D-ribose degradation; D-ribose 5-phosphate from beta-D-ribopyranose: step 1/2. In terms of biological role, catalyzes the interconversion of beta-pyran and beta-furan forms of D-ribose. This chain is D-ribose pyranase, found in Bacillus cereus (strain ATCC 14579 / DSM 31 / CCUG 7414 / JCM 2152 / NBRC 15305 / NCIMB 9373 / NCTC 2599 / NRRL B-3711).